Here is a 231-residue protein sequence, read N- to C-terminus: Ribonuclease 3 (231 aa).

Positions 8 to 135 (VGDLERRIGH…LMAALYQDGG (128 aa)) constitute an RNase III domain. Glu48 provides a ligand contact to Mg(2+). Catalysis depends on residues Asp52 and Glu124. Residue Glu124 participates in Mg(2+) binding. In terms of domain architecture, DRBM spans 161-230 (DPKTALQEWA…AKALLEREGA (70 aa)). The segment at 210-231 (GKSRQEAEKAAAKALLEREGAG) is disordered. Residues 212–231 (SRQEAEKAAAKALLEREGAG) are compositionally biased toward basic and acidic residues.

The protein belongs to the ribonuclease III family. In terms of assembly, homodimer. It depends on Mg(2+) as a cofactor.

It localises to the cytoplasm. It catalyses the reaction Endonucleolytic cleavage to 5'-phosphomonoester.. Digests double-stranded RNA. Involved in the processing of primary rRNA transcript to yield the immediate precursors to the large and small rRNAs (23S and 16S). Processes some mRNAs, and tRNAs when they are encoded in the rRNA operon. Processes pre-crRNA and tracrRNA of type II CRISPR loci if present in the organism. The protein is Ribonuclease 3 of Caulobacter vibrioides (strain ATCC 19089 / CIP 103742 / CB 15) (Caulobacter crescentus).